Here is a 176-residue protein sequence, read N- to C-terminus: dCTP deaminase (176 aa).

Residues 102–107 (RSTFAR) and D118 each bind dCTP. Catalysis depends on E128, which acts as the Proton donor/acceptor. DCTP contacts are provided by Y160, K166, and Q167.

Belongs to the dCTP deaminase family. Homotrimer.

It carries out the reaction dCTP + H2O + H(+) = dUTP + NH4(+). It functions in the pathway pyrimidine metabolism; dUMP biosynthesis; dUMP from dCTP (dUTP route): step 1/2. Catalyzes the deamination of dCTP to dUTP. This Staphylothermus marinus (strain ATCC 43588 / DSM 3639 / JCM 9404 / F1) protein is dCTP deaminase.